The following is a 43-amino-acid chain: U5-hexatoxin-Mr1a (43 aa).

4 disulfide bridges follow: Cys1–Cys16, Cys8–Cys21, Cys15–Cys36, and Cys17–Cys43.

The protein belongs to the neurotoxin 35 family. In terms of processing, contains 4 disulfide bonds. Expressed by the venom gland.

It is found in the secreted. In terms of biological role, this toxin blocks the neuromuscular transmission, and also acts on muscle. It exerts an effect of first exciting and then inhibiting the contraction of muscle. This toxin is active only against mammals. The polypeptide is U5-hexatoxin-Mr1a (Macrothele raveni (Funnel-web spider)).